We begin with the raw amino-acid sequence, 2540 residues long: Probable JmjC domain-containing histone demethylation protein 2C (2540 aa).

The segment covering 278-309 (TRAQANSPRPAMNSQAAVPKQNTHQQQQQRSI) has biased composition (polar residues). The tract at residues 278–478 (TRAQANSPRP…TVSDHNSNDL (201 aa)) is disordered. Phosphoserine occurs at positions 317 and 320. Over residues 323-342 (DEEKMKEEKYDYISRGENPK) the composition is skewed to basic and acidic residues. The span at 343 to 353 (GKNKHLMNKRR) shows a compositional bias: basic residues. The span at 354–371 (KPEEDEKKLNMKRLRTDN) shows a compositional bias: basic and acidic residues. Phosphoserine occurs at positions 373 and 376. Low complexity predominate over residues 373–382 (SDFSESSDSE). 3 stretches are compositionally biased toward basic and acidic residues: residues 383–403 (NSNK…ELKN), 410–427 (NGEE…EETL), and 438–452 (QEDK…RKSV). The span at 464–478 (SSEQSTVSDHNSNDL) shows a compositional bias: polar residues. Residues Ser-475 and Ser-501 each carry the phosphoserine modification. A Phosphothreonine modification is found at Thr-505. Ser-601, Ser-617, Ser-638, Ser-639, Ser-641, Ser-652, and Ser-943 each carry phosphoserine. The segment at 631–656 (VDTHKIKSSPSPEVVKPKITHSPDSV) is disordered. Disordered regions lie at residues 1242–1263 (GKVQ…SQAN) and 1614–1692 (NRRK…NSNT). Residues 1643–1652 (KRQPKPTYKK) are compositionally biased toward basic residues. The segment covering 1653-1669 (KQNDLQKRKGEIEEDLK) has biased composition (basic and acidic residues). The C6-type zinc-finger motif lies at 1846 to 1871 (CDACEATLFNIHWVCQKCGFVVCLDC). Residues 1971-1991 (PESQQQNTPPKSEKNGGSSPE) are compositionally biased toward polar residues. The segment at 1971–2064 (PESQQQNTPP…LVSQNNEQGS (94 aa)) is disordered. The residue at position 1989 (Ser-1989) is a Phosphoserine. Basic and acidic residues predominate over residues 2016–2043 (AEQKAREEKKENKELTLENQIKEEREQD). Over residues 2045–2064 (SESPNGRTSPLVSQNNEQGS) the composition is skewed to polar residues. Residues 2066–2070 (LRDLL) carry the LXXLL motif motif. Residues Lys-2132 and Lys-2136 each participate in a glycyl lysine isopeptide (Lys-Gly) (interchain with G-Cter in SUMO2) cross-link. Positions 2274–2498 (MPARYEDLLK…ESFHLTQELR (225 aa)) constitute a JmjC domain. Positions 2336, 2338, and 2466 each coordinate Fe cation.

The protein belongs to the JHDM2 histone demethylase family. In terms of assembly, interacts specifically with the ligand-binding domain of the thyroid receptor (TR). Requires the presence of thyroid hormone for its interaction. It depends on Fe(2+) as a cofactor.

The protein localises to the nucleus. In terms of biological role, probable histone demethylase that specifically demethylates 'Lys-9' of histone H3, thereby playing a central role in histone code. Demethylation of Lys residue generates formaldehyde and succinate. May be involved in hormone-dependent transcriptional activation, by participating in recruitment to androgen-receptor target genes. This is Probable JmjC domain-containing histone demethylation protein 2C (JMJD1C) from Homo sapiens (Human).